We begin with the raw amino-acid sequence, 213 residues long: Kynurenine formamidase (213 aa).

Tryptophan 20 is a binding site for substrate. Zn(2+) contacts are provided by histidine 50, histidine 54, and aspartate 56. The active-site Proton donor/acceptor is histidine 60. Zn(2+)-binding residues include histidine 161 and glutamate 173.

Belongs to the Cyclase 1 superfamily. KynB family. Homodimer. Zn(2+) is required as a cofactor.

It carries out the reaction N-formyl-L-kynurenine + H2O = L-kynurenine + formate + H(+). It functions in the pathway amino-acid degradation; L-tryptophan degradation via kynurenine pathway; L-kynurenine from L-tryptophan: step 2/2. Its function is as follows. Catalyzes the hydrolysis of N-formyl-L-kynurenine to L-kynurenine, the second step in the kynurenine pathway of tryptophan degradation. The chain is Kynurenine formamidase from Pseudomonas aeruginosa (strain ATCC 15692 / DSM 22644 / CIP 104116 / JCM 14847 / LMG 12228 / 1C / PRS 101 / PAO1).